Consider the following 548-residue polypeptide: 4-coumarate--CoA ligase CCL1 (548 aa).

Residues serine 195–lysine 203, glutamine 337–threonine 342, aspartate 426, isoleucine 438–arginine 441, and lysine 532 each bind ATP. Residues glutamate 268–glutamine 337 are SBD1. The interval glycine 338–tyrosine 405 is SBD2.

The protein belongs to the ATP-dependent AMP-binding enzyme family. Mostly expressed in glandular trichomes (lupulin glands) after flowering, and, to a lower extent, in stems, leaves, cones and flowers.

The protein localises to the cytoplasm. It catalyses the reaction (E)-4-coumarate + ATP + CoA = (E)-4-coumaroyl-CoA + AMP + diphosphate. It functions in the pathway secondary metabolite biosynthesis. Involved in the biosynthesis of prenylated phenolics natural products which contribute to the bitter taste of beer and display broad biological activities. Catalyzes the ligation of CoA on (E)-4-coumarate to produce (E)-4-coumaroyl-CoA. This Humulus lupulus (European hop) protein is 4-coumarate--CoA ligase CCL1.